The primary structure comprises 190 residues: MESLKQKILSEGIVLSDQVLKVDAFLNHQIDPALMQQIGHEFAQRFAGQGITKIVTIEASGIAPAVMAGLELGIPVIFARKFQSLTLKDDLLISKVFSFTKQTESTIAISARHLTAADKVLVIDDFLANGHAAKALIDLIQQAGAQVAGIGIVIEKSFQEGRNLLESEGYRVESLARVAALENGQVRFLD.

Xanthine contacts are provided by leucine 20 and asparagine 27. 128–132 is a binding site for 5-phospho-alpha-D-ribose 1-diphosphate; it reads ANGHA. Position 156 (lysine 156) interacts with xanthine.

The protein belongs to the purine/pyrimidine phosphoribosyltransferase family. Xpt subfamily. As to quaternary structure, homodimer.

Its subcellular location is the cytoplasm. The catalysed reaction is XMP + diphosphate = xanthine + 5-phospho-alpha-D-ribose 1-diphosphate. It participates in purine metabolism; XMP biosynthesis via salvage pathway; XMP from xanthine: step 1/1. Functionally, converts the preformed base xanthine, a product of nucleic acid breakdown, to xanthosine 5'-monophosphate (XMP), so it can be reused for RNA or DNA synthesis. The protein is Xanthine phosphoribosyltransferase of Ectopseudomonas mendocina (strain ymp) (Pseudomonas mendocina).